We begin with the raw amino-acid sequence, 264 residues long: 5'-nucleotidase SurE (264 aa).

Positions 10, 11, 43, and 97 each coordinate a divalent metal cation.

This sequence belongs to the SurE nucleotidase family. Requires a divalent metal cation as cofactor.

It localises to the cytoplasm. It catalyses the reaction a ribonucleoside 5'-phosphate + H2O = a ribonucleoside + phosphate. In terms of biological role, nucleotidase that shows phosphatase activity on nucleoside 5'-monophosphates. This is 5'-nucleotidase SurE from Sulfurimonas denitrificans (strain ATCC 33889 / DSM 1251) (Thiomicrospira denitrificans (strain ATCC 33889 / DSM 1251)).